Consider the following 360-residue polypeptide: 3-isopropylmalate dehydrogenase (360 aa).

Residue 76–89 (GPKWDTIERDIRPE) coordinates NAD(+). Substrate-binding residues include R96, R106, R134, and D224. Mg(2+)-binding residues include D224, D248, and D252. 282–294 (GSAPDIAGKGIAN) is a binding site for NAD(+).

It belongs to the isocitrate and isopropylmalate dehydrogenases family. LeuB type 1 subfamily. In terms of assembly, homodimer. Requires Mg(2+) as cofactor. The cofactor is Mn(2+).

It is found in the cytoplasm. The enzyme catalyses (2R,3S)-3-isopropylmalate + NAD(+) = 4-methyl-2-oxopentanoate + CO2 + NADH. The protein operates within amino-acid biosynthesis; L-leucine biosynthesis; L-leucine from 3-methyl-2-oxobutanoate: step 3/4. Catalyzes the oxidation of 3-carboxy-2-hydroxy-4-methylpentanoate (3-isopropylmalate) to 3-carboxy-4-methyl-2-oxopentanoate. The product decarboxylates to 4-methyl-2 oxopentanoate. In Pseudomonas fluorescens (strain Pf0-1), this protein is 3-isopropylmalate dehydrogenase.